The chain runs to 1178 residues: Integrin alpha-2 (1178 aa).

Positions 1–26 (MGPGQAGGALLLRLLMLVQGILNCLA) are cleaved as a signal peptide. The Extracellular portion of the chain corresponds to 27–1129 (YNVGLPGAKI…KPTEKAEVPT (1103 aa)). FG-GAP repeat units follow at residues 31–89 (LPGA…TATC) and 98–158 (ASIS…FLTS). Cysteines 80 and 89 form a disulfide. N-linked (GlcNAc...) asparagine glycosylation is found at Asn-102 and Asn-109. In terms of domain architecture, VWFA spans 185–362 (WEAVKNFLVK…TLGEQIFSIE (178 aa)). FG-GAP repeat units follow at residues 363 to 417 (GTVQ…VIFP), 420 to 472 (AFDQ…KQGN), 474 to 536 (TVIQ…ILNQ), 537 to 595 (HQFL…TIRT), and 601 to 661 (ILGS…FTPD). 3 N-linked (GlcNAc...) asparagine glycosylation sites follow: Asn-429, Asn-457, and Asn-472. The short motif at 480 to 482 (RGD) is the Cell attachment site element. Ca(2+) is bound by residues Asp-496, Asp-498, Asp-500, Asp-504, Asp-560, Asn-562, Asp-564, Asp-568, Asp-624, Asn-626, Asp-628, and Asp-632. Intrachain disulfides connect Cys-677–Cys-734, Cys-786–Cys-792, Cys-862–Cys-873, Cys-1016–Cys-1047, and Cys-1052–Cys-1057. Asn-696 is a glycosylation site (N-linked (GlcNAc...) asparagine). Residues Asn-1054, Asn-1071, and Asn-1078 are each glycosylated (N-linked (GlcNAc...) asparagine). Residues 1130–1151 (GVIIGSIIAGILLLLAMTAGLW) traverse the membrane as a helical segment. The Cytoplasmic portion of the chain corresponds to 1152–1178 (KLGFFKRQYKKMGQNPDEMDETTELNS). The short motif at 1154 to 1158 (GFFKR) is the GFFKR motif element.

It belongs to the integrin alpha chain family. As to quaternary structure, heterodimer of an alpha and a beta subunit. Alpha-2 associates with beta-1. Interacts with HPS5 and RAB21.

It localises to the membrane. Integrin alpha-2/beta-1 is a collagen receptor, being responsible for adhesion of platelets and other cells to collagens, modulation of collagen and collagenase gene expression, force generation and organization of newly synthesized extracellular matrix. It is also a receptor for laminins, collagen C-propeptides and E-cadherin. Mice homozygous for a null mutation in the alpha-2 die very early in embryogenesis. This chain is Integrin alpha-2 (Itga2), found in Mus musculus (Mouse).